An 830-amino-acid chain; its full sequence is Penicillin-binding protein 1A (830 aa).

Basic residues predominate over residues 1-17; sequence MTERKREHKDRKQKKNS. Residues 1–20 form a disordered region; sequence MTERKREHKDRKQKKNSPKN. The Cytoplasmic portion of the chain corresponds to 1 to 30; that stretch reads MTERKREHKDRKQKKNSPKNQSKVTKFLKW. Residues 31–51 traverse the membrane as a helical; Signal-anchor for type II membrane protein segment; the sequence is FFIGILLLGITAVTVVGIYVL. Residues 52-830 lie on the Extracellular side of the membrane; the sequence is SIIRSSPELD…QNGQNNNITQ (779 aa). The transglycosylase stretch occupies residues 72 to 244; it reads SILYDDQGNF…PTSYDGLSEA (173 aa). The active-site Proton donor; for transglycosylase activity is E111. The interval 378-663 is transpeptidase; sequence ASATIIDYKT…TSPIFGKIMG (286 aa). S417 acts as the Acyl-ester intermediate; for transpeptidase activity in catalysis. A disordered region spans residues 731-830; the sequence is APDTNDNNNS…QNGQNNNITQ (100 aa). Positions 735-746 are enriched in low complexity; sequence NDNNNSGANEGN. Residues 747-758 are compositionally biased toward basic and acidic residues; that stretch reads KQQETKPEEVKP. Low complexity-rich tracts occupy residues 759–807 and 816–830; these read NENN…NTNN and GNNQNQNGQNNNITQ.

It in the N-terminal section; belongs to the glycosyltransferase 51 family. In the C-terminal section; belongs to the transpeptidase family.

It localises to the cell membrane. It catalyses the reaction [GlcNAc-(1-&gt;4)-Mur2Ac(oyl-L-Ala-gamma-D-Glu-L-Lys-D-Ala-D-Ala)](n)-di-trans,octa-cis-undecaprenyl diphosphate + beta-D-GlcNAc-(1-&gt;4)-Mur2Ac(oyl-L-Ala-gamma-D-Glu-L-Lys-D-Ala-D-Ala)-di-trans,octa-cis-undecaprenyl diphosphate = [GlcNAc-(1-&gt;4)-Mur2Ac(oyl-L-Ala-gamma-D-Glu-L-Lys-D-Ala-D-Ala)](n+1)-di-trans,octa-cis-undecaprenyl diphosphate + di-trans,octa-cis-undecaprenyl diphosphate + H(+). The catalysed reaction is Preferential cleavage: (Ac)2-L-Lys-D-Ala-|-D-Ala. Also transpeptidation of peptidyl-alanyl moieties that are N-acyl substituents of D-alanine.. It functions in the pathway cell wall biogenesis; peptidoglycan biosynthesis. In terms of biological role, cell wall formation. Synthesis of cross-linked peptidoglycan from the lipid intermediates. The enzyme has a penicillin-insensitive transglycosylase N-terminal domain (formation of linear glycan strands) and a penicillin-sensitive transpeptidase C-terminal domain (cross-linking of the peptide subunits). This chain is Penicillin-binding protein 1A (pbpA), found in Clostridium perfringens (strain ATCC 13124 / DSM 756 / JCM 1290 / NCIMB 6125 / NCTC 8237 / Type A).